Here is a 674-residue protein sequence, read N- to C-terminus: Methionine--tRNA ligase (674 aa).

Positions 11 to 21 (PYANGDLHLGH) match the 'HIGH' region motif. 4 residues coordinate Zn(2+): Cys-142, Cys-145, Cys-155, and Cys-158. Positions 330 to 334 (KMSKS) match the 'KMSKS' region motif. Lys-333 is an ATP binding site. A tRNA-binding domain is found at 574 to 674 (DFMKVDLRIA…EGAQPGMRVK (101 aa)).

The protein belongs to the class-I aminoacyl-tRNA synthetase family. MetG type 1 subfamily. Homodimer. The cofactor is Zn(2+).

The protein localises to the cytoplasm. It catalyses the reaction tRNA(Met) + L-methionine + ATP = L-methionyl-tRNA(Met) + AMP + diphosphate. Functionally, is required not only for elongation of protein synthesis but also for the initiation of all mRNA translation through initiator tRNA(fMet) aminoacylation. The protein is Methionine--tRNA ligase of Francisella tularensis subsp. tularensis (strain FSC 198).